Consider the following 985-residue polypeptide: MPESLIAGIPVHFPFEPYPVQRAYMEKVIHCLRDGTNGVLESPTGTGKTLSLLCSSLAWIRTRQSEHQKQMVKMEKADFSGLGGGAPGGDLSELAKTMGRANNWGVPKVIYASRTHSQLTQAMRELKRTAYANMRSVVLGSRDQLCIHPEVMREQGNSNKTNMCKLRVHSKTCSFQMRVESRKDHPDLRGPTIMDIEDLVKVGQRLKICPYFASRELVPQADITFMPYNYLLDPKARKANKIELGNTIVILDEAHNIEKICEESASVQIKSSDVAMAIEDVTHIMQVFASGESQDMAGDEPKDFTLDDLTLLKEMLLELEKAIDAIVVDNAVDGTTFPASMMYELLGKANFTYGNVATIVSLLDKLVQYLLVASQQMSIRKGGTFTLLSDLLTIVFANKEDVMSKVYASFKVHVLVEESKQGHGKQQGAKQQGGWLGKGTIAAATGLSKVAKIINFWCFNPGFGMEQLLNTQVRSVILTSGTLAPLKPLIAELAIPVAQHLENPHIVDQSQVYVKIIGTGPDRQQLISNYANRDNPKYISSLGQTILNVARIVPDGLLVFFPSYPMLNKCVDAWQASGLWADISCKKPIFLEPRSKDQFTSTMEEFYQAIRDSKGAVFMAVCRGKVSEGLDFADRNGRAVIITGLPFPPLKDPKVILKRRYLEANRTRENQLLSGQEWYNLDATRAVNQAIGRVIRHRNDYGAILLCDSRFKDASQVQQLSKWIRGHLGDRPQCSPFGPIVRELRQFFKNAEANMKLPDERETDSPLETVCKTEDEPLAAIPKVKREPGSNATFKSANESAIKVEMANSIKTWTPADYASAAGHKLGGAAPNAMDFMSRLDSNVSSIDFNCCTDSKSGSSGLVKIHKRERSSPTAPESSSQVTKKRYKLVENIKVEPSSSQAKEAPEERAAFLRELRSLVTQDQFRRFGKALLEYKNGTYESFQALMAILLDVLSAPKVRYMLVGMRKYLKNEHKDEFDRRVGNL.

The region spanning alanine 7–aspartate 303 is the Helicase ATP-binding domain. Serine 42–threonine 49 is a binding site for ATP. [4Fe-4S] cluster contacts are provided by cysteine 146, cysteine 164, cysteine 173, and cysteine 209. Residues aspartate 252–histidine 255 carry the DEAH box motif. A disordered region spans residues valine 863 to threonine 883. Residues serine 872–valine 882 show a composition bias toward polar residues. Threonine 874 is subject to Phosphothreonine.

Belongs to the helicase family. RAD3/XPD subfamily. In terms of tissue distribution, expressed in both male germline and somatic cells (at protein level). Expressed in ovarian germline stem cells (at protein level). Expressed in adult testes (at protein level). Expressed in the germarium including germline stem cells.

Its subcellular location is the nucleus. The protein resides in the chromosome. It carries out the reaction ATP + H2O = ADP + phosphate + H(+). A probable ATP-dependent DNA helicase implicated in DNA repair and the maintenance of genomic stability. Acts as an anti-recombinase to counteract toxic recombination and limit crossover during meiosis. Regulates meiotic recombination and crossover homeostasis by physically dissociating strand invasion events and thereby promotes noncrossover repair by meiotic synthesis dependent strand annealing (SDSA) as well as disassembly of D loop recombination intermediates. In male germline stem cells (GSCs), plays a role in GSCs maintenance during larval germline development by modulating the expression of genes such as Stat92E and preventing DNA damage-induced checkpoint activation. May play a role in female germline stem cell maintenance. The protein is Regulator of telomere elongation helicase 1 homolog of Drosophila melanogaster (Fruit fly).